The primary structure comprises 546 residues: Probable protein kinase UbiB (546 aa).

Residues 124–502 enclose the Protein kinase domain; it reads DFDIQPLASA…HVRQSQSRYL (379 aa). Residues 130–138 and lysine 153 each bind ATP; that span reads LASASIAQV. Aspartate 288 acts as the Proton acceptor in catalysis. The next 2 membrane-spanning stretches (helical) occupy residues 501-521 and 522-542; these read YLLG…VNRP and EWGL…LVGW.

It belongs to the ABC1 family. UbiB subfamily.

Its subcellular location is the cell inner membrane. It participates in cofactor biosynthesis; ubiquinone biosynthesis [regulation]. Its function is as follows. Is probably a protein kinase regulator of UbiI activity which is involved in aerobic coenzyme Q (ubiquinone) biosynthesis. The protein is Probable protein kinase UbiB of Salmonella agona (strain SL483).